A 122-amino-acid chain; its full sequence is MIQTETRLTVADNSGAKELYCIKVLGGSKRRYAGIGDVIVVSVKEAIPNAKVKKGDVVKAVIVRTKKEVSRPDGSMIRFDDNSAVIINASNEPIGTRIFGPVARELRAKRFMKIISLAPEVL.

Belongs to the universal ribosomal protein uL14 family. As to quaternary structure, part of the 50S ribosomal subunit. Forms a cluster with proteins L3 and L19. In the 70S ribosome, L14 and L19 interact and together make contacts with the 16S rRNA in bridges B5 and B8.

In terms of biological role, binds to 23S rRNA. Forms part of two intersubunit bridges in the 70S ribosome. The polypeptide is Large ribosomal subunit protein uL14 (Desulforapulum autotrophicum (strain ATCC 43914 / DSM 3382 / VKM B-1955 / HRM2) (Desulfobacterium autotrophicum)).